Consider the following 568-residue polypeptide: Potassium-transporting ATPase potassium-binding subunit (568 aa).

Helical transmembrane passes span 7–27, 65–85, 136–156, 179–199, 254–274, 285–305, 332–352, 354–374, 377–397, 423–443, 487–507, and 530–550; these read ITIG…GGFL, HYAL…YAIL, GLTV…AAII, LYVL…EGIP, LTNF…TNVF, WAVF…VYWA, FGVA…CGAV, AMHE…MMLG, IIGG…IAVF, MLAV…AVVV, ITLG…ALAI, and LFIG…FLPA.

The protein belongs to the KdpA family. The system is composed of three essential subunits: KdpA, KdpB and KdpC.

Its subcellular location is the cell inner membrane. Its function is as follows. Part of the high-affinity ATP-driven potassium transport (or Kdp) system, which catalyzes the hydrolysis of ATP coupled with the electrogenic transport of potassium into the cytoplasm. This subunit binds the periplasmic potassium ions and delivers the ions to the membrane domain of KdpB through an intramembrane tunnel. The polypeptide is Potassium-transporting ATPase potassium-binding subunit (Granulibacter bethesdensis (strain ATCC BAA-1260 / CGDNIH1)).